The following is a 340-amino-acid chain: Tryptophan--tRNA ligase (340 aa).

ATP contacts are provided by residues 11-13 (RPT) and 19-20 (GH). Residues 12 to 20 (PTGKLHLGH) carry the 'HIGH' region motif. Aspartate 140 contacts L-tryptophan. Residues 152–154 (GND), leucine 194, and 202–206 (KMSKS) contribute to the ATP site. The 'KMSKS' region signature appears at 202–206 (KMSKS).

Belongs to the class-I aminoacyl-tRNA synthetase family. As to quaternary structure, homodimer.

The protein localises to the cytoplasm. It carries out the reaction tRNA(Trp) + L-tryptophan + ATP = L-tryptophyl-tRNA(Trp) + AMP + diphosphate + H(+). Its function is as follows. Catalyzes the attachment of tryptophan to tRNA(Trp). The polypeptide is Tryptophan--tRNA ligase (Streptococcus pyogenes serotype M3 (strain ATCC BAA-595 / MGAS315)).